A 457-amino-acid polypeptide reads, in one-letter code: MRESLKLSLFYFNKKERNKMNYTTQMDAAKRGIVTKEMETIAKKEGIDVKKIIECVAKGSVAIPANKNHKSLSAEGVGQGLRTKINVNLGISKDCCNVDRELEKVKKAIDMKAEAIMDLSCFGKTQEFRKRLIEMSPAMIGTVPMYDAIGFYDKELKDITAEELLDVIETHAKDGVDFMTIHAGLNREAVEIFKRNERLTNIVSRGGSLLYAWMELNNKENPFYEHFDKVLDICEKYDVTISLGDACRPGSIHDSTDASQIKELMTLGELTKRAWERNVQIIIEGPGHMSLDEIETNMKLEKKLCYNAPFYVLGPIVTDIAPGYDHITSAIGGAIAATYGADFLCYVTPAEHLRLPDLDDMKEGIIATKIAAHAADIAKGIKGAREWDNKMSVARKELDWEKMFDLAIDNEKARKYRKNSTPEVNDSCTMCGKMCAVRNMNKVMQGKDINILRNEDK.

Substrate-binding positions include Asn88, Met117, Tyr146, His182, Ser204–Gly206, Asp245–Arg248, and Glu284. His288 lines the Zn(2+) pocket. Tyr311 provides a ligand contact to substrate. His352 contributes to the Zn(2+) binding site. Residues Cys428, Cys431, and Cys435 each contribute to the [4Fe-4S] cluster site.

This sequence belongs to the ThiC family. It depends on [4Fe-4S] cluster as a cofactor.

The enzyme catalyses 5-amino-1-(5-phospho-beta-D-ribosyl)imidazole + S-adenosyl-L-methionine = 4-amino-2-methyl-5-(phosphooxymethyl)pyrimidine + CO + 5'-deoxyadenosine + formate + L-methionine + 3 H(+). It functions in the pathway cofactor biosynthesis; thiamine diphosphate biosynthesis. Functionally, catalyzes the synthesis of the hydroxymethylpyrimidine phosphate (HMP-P) moiety of thiamine from aminoimidazole ribotide (AIR) in a radical S-adenosyl-L-methionine (SAM)-dependent reaction. In Clostridium tetani (strain Massachusetts / E88), this protein is Phosphomethylpyrimidine synthase.